The primary structure comprises 349 residues: D-alanine--D-alanine ligase (349 aa).

The ATP-grasp domain occupies 133 to 335 (QVLESATTIP…YSVLIEELVS (203 aa)). 163-218 (EEKLIYPVFVKPANMGSSVGISKAENRTDLKQAIALALKYDSRVLIEQGVDAREIE) lines the ATP pocket. 3 residues coordinate Mg(2+): Asp289, Glu302, and Asn304.

This sequence belongs to the D-alanine--D-alanine ligase family. Mg(2+) serves as cofactor. The cofactor is Mn(2+).

Its subcellular location is the cytoplasm. It carries out the reaction 2 D-alanine + ATP = D-alanyl-D-alanine + ADP + phosphate + H(+). The protein operates within cell wall biogenesis; peptidoglycan biosynthesis. Functionally, cell wall formation. The sequence is that of D-alanine--D-alanine ligase from Streptococcus mutans serotype c (strain ATCC 700610 / UA159).